Reading from the N-terminus, the 330-residue chain is Inorganic pyrophosphatase 2, mitochondrial (330 aa).

The transit peptide at 1-27 (MRALLPLLSVGRGWRVGAAARPPRRVM) directs the protein to the mitochondrion. Positions 159, 164, and 196 each coordinate Mg(2+). The residue at position 211 (K211) is an N6-succinyllysine. N6-acetyllysine is present on K219. An N6-succinyllysine modification is found at K254. K256 bears the N6-acetyllysine mark.

The protein belongs to the PPase family. As to quaternary structure, homodimer. Requires Mg(2+) as cofactor.

It localises to the mitochondrion. The catalysed reaction is diphosphate + H2O = 2 phosphate + H(+). Functionally, hydrolyzes inorganic pyrophosphate. This activity is essential for correct regulation of mitochondrial membrane potential, and mitochondrial organization and function. The polypeptide is Inorganic pyrophosphatase 2, mitochondrial (Ppa2) (Mus musculus (Mouse)).